Here is a 759-residue protein sequence, read N- to C-terminus: Forkhead box protein M1 (759 aa).

The segment at 1–92 (MRTSPRRPLI…MRLPSNPPQS (92 aa)) is disordered. Residues 48 to 63 (LAHELEDMAPKSKADQ) are compositionally biased toward basic and acidic residues. The fork-head DNA-binding region spans 260 to 358 (RPPYSYMALI…KTASPMSPAD (99 aa)). 3 disordered regions span residues 420–450 (AESS…KHLG), 516–535 (SANP…PSNV), and 596–631 (KEHF…RDPV). Over residues 601–612 (KPTTSSTPSKPT) the composition is skewed to low complexity.

As to expression, localized to the animal hemisphere of early cleavage stage embryos. During neurulation, expressed in the neural folds. Later, expressed in the spinal cord and in the eye field. During tailbud stages, expression is still restricted to the neuroectoderm, predominantly to the hindbrain, the eye and the spinal cord. With ongoing development, expression is also found at lower levels in the branchial arches. At stage 35, expressed in the rhombencephalon and in the eye retina.

The protein localises to the nucleus. Its function is as follows. Transcription factor regulating the expression of cell cycle genes essential for DNA replication and mitosis. Plays a role in the control of cell proliferation. Also plays a role in DNA break repair, participating in the DNA damage checkpoint response. Promotes transcription of PHB2. This is Forkhead box protein M1 from Xenopus laevis (African clawed frog).